The sequence spans 619 residues: 1-deoxy-D-xylulose-5-phosphate synthase (619 aa).

Thiamine diphosphate-binding positions include H74 and 115 to 117 (GHS). D146 serves as a coordination point for Mg(2+). Thiamine diphosphate is bound by residues 147–148 (GA), N175, Y285, and E365. N175 is a binding site for Mg(2+).

The protein belongs to the transketolase family. DXPS subfamily. Homodimer. Requires Mg(2+) as cofactor. Thiamine diphosphate is required as a cofactor.

The catalysed reaction is D-glyceraldehyde 3-phosphate + pyruvate + H(+) = 1-deoxy-D-xylulose 5-phosphate + CO2. Its pathway is metabolic intermediate biosynthesis; 1-deoxy-D-xylulose 5-phosphate biosynthesis; 1-deoxy-D-xylulose 5-phosphate from D-glyceraldehyde 3-phosphate and pyruvate: step 1/1. Its function is as follows. Catalyzes the acyloin condensation reaction between C atoms 2 and 3 of pyruvate and glyceraldehyde 3-phosphate to yield 1-deoxy-D-xylulose-5-phosphate (DXP). This chain is 1-deoxy-D-xylulose-5-phosphate synthase, found in Clostridium perfringens (strain ATCC 13124 / DSM 756 / JCM 1290 / NCIMB 6125 / NCTC 8237 / Type A).